The following is a 416-amino-acid chain: Adenylosuccinate synthetase (416 aa).

GTP contacts are provided by residues 13-19 and 41-43; these read GDEGKGK and GHT. Asp14 functions as the Proton acceptor in the catalytic mechanism. Positions 14 and 41 each coordinate Mg(2+). IMP-binding positions include 14–17, 39–42, Thr126, Arg140, Gln220, Thr235, and Arg299; these read DEGK and NAGH. The Proton donor role is filled by His42. 295-301 is a binding site for substrate; that stretch reads TTTGRRR. GTP contacts are provided by residues Arg301, 327-329, and 405-407; these read KLD and STS.

It belongs to the adenylosuccinate synthetase family. Homodimer. It depends on Mg(2+) as a cofactor.

It is found in the cytoplasm. The catalysed reaction is IMP + L-aspartate + GTP = N(6)-(1,2-dicarboxyethyl)-AMP + GDP + phosphate + 2 H(+). Its pathway is purine metabolism; AMP biosynthesis via de novo pathway; AMP from IMP: step 1/2. In terms of biological role, plays an important role in the de novo pathway of purine nucleotide biosynthesis. Catalyzes the first committed step in the biosynthesis of AMP from IMP. This chain is Adenylosuccinate synthetase, found in Campylobacter curvus (strain 525.92).